The following is an 810-amino-acid chain: Zinc finger transcription factor YRR1 (810 aa).

The segment at 1 to 47 (MKRRSDALLGSFQATNVTPPSDNSNSTAGGANGSNSGTPTSTSGKKR) is disordered. The span at 12–22 (FQATNVTPPSD) shows a compositional bias: polar residues. Low complexity predominate over residues 23–43 (NSNSTAGGANGSNSGTPTSTS). The segment at residues 54–82 (CGFCRRRKLRCDQQKPMCSTCISRNLTTC) is a DNA-binding region (zn(2)-C6 fungal-type). A disordered region spans residues 722-742 (ELDPQSDNPSSEAKIVSDRQR).

The protein resides in the cytoplasm. Its subcellular location is the nucleus. Functionally, transcription factor involved in the regulation of multidrug resistance genes. Acts in concert with YRR1. The sequence is that of Zinc finger transcription factor YRR1 (YRR1) from Saccharomyces cerevisiae (strain ATCC 204508 / S288c) (Baker's yeast).